The primary structure comprises 307 residues: Pseudouridine-5'-phosphate glycosidase (307 aa).

Glu-25 (proton donor) is an active-site residue. Residues Lys-86 and Val-106 each contribute to the substrate site. Asp-138 contributes to the Mn(2+) binding site. Position 140–142 (140–142) interacts with substrate; that stretch reads SAD. The Nucleophile role is filled by Lys-159.

This sequence belongs to the pseudouridine-5'-phosphate glycosidase family. As to quaternary structure, homotrimer. Mn(2+) is required as a cofactor.

The enzyme catalyses D-ribose 5-phosphate + uracil = psi-UMP + H2O. Functionally, catalyzes the reversible cleavage of pseudouridine 5'-phosphate (PsiMP) to ribose 5-phosphate and uracil. Functions biologically in the cleavage direction, as part of a pseudouridine degradation pathway. In Caldanaerobacter subterraneus subsp. tengcongensis (strain DSM 15242 / JCM 11007 / NBRC 100824 / MB4) (Thermoanaerobacter tengcongensis), this protein is Pseudouridine-5'-phosphate glycosidase.